The chain runs to 234 residues: Phosphoribosylaminoimidazole-succinocarboxamide synthase (234 aa).

It belongs to the SAICAR synthetase family.

The enzyme catalyses 5-amino-1-(5-phospho-D-ribosyl)imidazole-4-carboxylate + L-aspartate + ATP = (2S)-2-[5-amino-1-(5-phospho-beta-D-ribosyl)imidazole-4-carboxamido]succinate + ADP + phosphate + 2 H(+). It participates in purine metabolism; IMP biosynthesis via de novo pathway; 5-amino-1-(5-phospho-D-ribosyl)imidazole-4-carboxamide from 5-amino-1-(5-phospho-D-ribosyl)imidazole-4-carboxylate: step 1/2. This Clostridium botulinum (strain Langeland / NCTC 10281 / Type F) protein is Phosphoribosylaminoimidazole-succinocarboxamide synthase.